We begin with the raw amino-acid sequence, 356 residues long: tRNA N6-adenosine threonylcarbamoyltransferase (356 aa).

Residues His122, His126, and Tyr143 each contribute to the a divalent metal cation site. Residues 143-147 (YVSGG), Asp175, Gly190, Glu194, and Asn287 each bind substrate. An a divalent metal cation-binding site is contributed by Asp315.

It belongs to the KAE1 / TsaD family. As to quaternary structure, component of the EKC/KEOPS complex composed of at least BUD32, CGI121, GON7, KAE1 and PCC1; the whole complex dimerizes. Requires a divalent metal cation as cofactor.

It localises to the cytoplasm. The protein localises to the nucleus. It catalyses the reaction L-threonylcarbamoyladenylate + adenosine(37) in tRNA = N(6)-L-threonylcarbamoyladenosine(37) in tRNA + AMP + H(+). Its function is as follows. Component of the EKC/KEOPS complex that is required for the formation of a threonylcarbamoyl group on adenosine at position 37 (t(6)A37) in tRNAs that read codons beginning with adenine. The complex is probably involved in the transfer of the threonylcarbamoyl moiety of threonylcarbamoyl-AMP (TC-AMP) to the N6 group of A37. KAE1 likely plays a direct catalytic role in this reaction, but requires other protein(s) of the complex to fulfill this activity. The EKC/KEOPS complex also promotes both telomere uncapping and telomere elongation. The complex is required for efficient recruitment of transcriptional coactivators. This Chaetomium globosum (strain ATCC 6205 / CBS 148.51 / DSM 1962 / NBRC 6347 / NRRL 1970) (Soil fungus) protein is tRNA N6-adenosine threonylcarbamoyltransferase.